Consider the following 282-residue polypeptide: NADH-ubiquinone oxidoreductase chain 2 (282 aa).

Transmembrane regions (helical) follow at residues 17–37, 58–78, 87–107, 115–135, 166–186, 202–222, and 232–252; these read ILTN…VVFI, SLGL…IILL, FWIF…FLTF, ILLQ…LLIC, FSMF…VLLI, TTLV…IFSL, and FTLF…FWLI.

It belongs to the complex I subunit 2 family.

Its subcellular location is the mitochondrion inner membrane. It carries out the reaction a ubiquinone + NADH + 5 H(+)(in) = a ubiquinol + NAD(+) + 4 H(+)(out). Functionally, core subunit of the mitochondrial membrane respiratory chain NADH dehydrogenase (Complex I) that is believed to belong to the minimal assembly required for catalysis. Complex I functions in the transfer of electrons from NADH to the respiratory chain. The immediate electron acceptor for the enzyme is believed to be ubiquinone. This is NADH-ubiquinone oxidoreductase chain 2 from Caenorhabditis elegans.